We begin with the raw amino-acid sequence, 534 residues long: MEGPTHPKPSKDKTFSWDLMILVGVLLRLDVGMANPSPHQIYNVTWTITNLVTGTKANATSMLGTLTDAFPTMYFDLCDIIGNTWNPSDQEPFPGYGCDHPMRRWQQRNTPFYVCPGHANRKQCGGPQDGFCAVWGCETTGETYWRPTSSWDYITVKKGVTQGIYQCSGGGWCGPCYDKAVHSSITGASEGGRCNPLILQFTQKGRQTSWDGPKSWGLRLYRSGYDPIALFSVSRQVMTITPPQAMGPNLVLPDQKPPSRQSQIESRVTPHHSQGNGGTPGITLVNASIAPLSTPVTPASPKRIGTGNRLINLVQGTYLALNVTNPNKTKDCWLCLVSRPPYYEGIAVLGNYSNQTNPPPSCLSDPQHKLTISEVSGQGLCIGTVPKTHQALCKKTQKGHKGTHYLAAPSGTYWACNTGLIPCISMAVLNWTSDFCVLIELWPRVTYHQPEYVYTHFDKTVRLRREPISLTVALMLGGLTVGGIAAGVGTGTKALLETAQFRQLQMAMHTDIQALEESISALEKSLTSLSEVVL.

Positions 1–34 (MEGPTHPKPSKDKTFSWDLMILVGVLLRLDVGMA) are cleaved as a signal peptide. Over 35 to 534 (NPSPHQIYNV…SLTSLSEVVL (500 aa)) the chain is Extracellular. 2 N-linked (GlcNAc...) asparagine; by host glycosylation sites follow: Asn-43 and Asn-58. 2 disulfide bridges follow: Cys-115–Cys-132 and Cys-124–Cys-137. Residues 245-279 (AMGPNLVLPDQKPPSRQSQIESRVTPHHSQGNGGT) are disordered. Over residues 258 to 274 (PSRQSQIESRVTPHHSQ) the composition is skewed to polar residues. Residues Asn-286, Asn-322, and Asn-327 are each glycosylated (N-linked (GlcNAc...) asparagine; by host). The CXXC motif lies at 332–335 (CWLC). N-linked (GlcNAc...) asparagine; by host glycosylation is found at Asn-351, Asn-354, and Asn-430. A fusion peptide region spans residues 468 to 488 (ISLTVALMLGGLTVGGIAAGV). The stretch at 496–534 (LETAQFRQLQMAMHTDIQALEESISALEKSLTSLSEVVL) forms a coiled coil.

As to quaternary structure, the mature envelope protein (Env) consists of a trimer of SU-TM heterodimers attached by noncovalent interactions or by a labile interchain disulfide bond. In terms of processing, specific enzymatic cleavages in vivo yield mature proteins. Envelope glycoproteins are synthesized as an inactive precursor that is N-glycosylated and processed likely by host cell furin or by a furin-like protease in the Golgi to yield the mature SU and TM proteins. The cleavage site between SU and TM requires the minimal sequence [KR]-X-[KR]-R.

It is found in the virion membrane. The protein resides in the host cell membrane. Functionally, the surface protein (SU) attaches the virus to the host cell by binding to its receptor. This interaction triggers the refolding of the transmembrane protein (TM) and is thought to activate its fusogenic potential by unmasking its fusion peptide. Fusion occurs at the host cell plasma membrane. Its function is as follows. The transmembrane protein (TM) acts as a class I viral fusion protein. Under the current model, the protein has at least 3 conformational states: pre-fusion native state, pre-hairpin intermediate state, and post-fusion hairpin state. During viral and target cell membrane fusion, the coiled coil regions (heptad repeats) assume a trimer-of-hairpins structure, positioning the fusion peptide in close proximity to the C-terminal region of the ectodomain. The formation of this structure appears to drive apposition and subsequent fusion of viral and target cell membranes. Membranes fusion leads to delivery of the nucleocapsid into the cytoplasm. This chain is Envelope glycoprotein (env), found in Feline sarcoma virus (strain Snyder-Theilen).